A 209-amino-acid polypeptide reads, in one-letter code: Casparian strip membrane protein 1 (209 aa).

Over 1–46 the chain is Cytoplasmic; the sequence is MSSGANATTIDVPETRAEAKGKAPLIAAPIVATTKATPHPNAGWKK. Residues 47–67 form a helical membrane-spanning segment; that stretch reads GLAIFDFLLRLAAIAATLAAA. The Extracellular segment spans residues 68–95; it reads TTMGTTDETLPFFTQFFQFQASFDDLPA. Residues 96 to 116 traverse the membrane as a helical segment; it reads FMFFVVATAIASGYLALSLPF. At 117–137 the chain is on the cytoplasmic side; the sequence is SLVSIFRPHAQGIRLLLIISD. The helical transmembrane segment at 138-158 threads the bilayer; that stretch reads TVMLALTTAGAASATAIVYLA. Residues 159 to 183 are Extracellular-facing; it reads HNGDSSANWIAICQQFTDFCQSVSG. A helical transmembrane segment spans residues 184-204; that stretch reads AVVASFIAVVIFMLLVMMSAL. The Cytoplasmic segment spans residues 205–209; the sequence is ALRKH.

The protein belongs to the Casparian strip membrane proteins (CASP) family. In terms of assembly, homodimer and heterodimers.

Its subcellular location is the cell membrane. In terms of biological role, regulates membrane-cell wall junctions and localized cell wall deposition. Required for establishment of the Casparian strip membrane domain (CSD) and the subsequent formation of Casparian strips, a cell wall modification of the root endodermis that determines an apoplastic barrier between the intraorganismal apoplasm and the extraorganismal apoplasm and prevents lateral diffusion. In Vitis vinifera (Grape), this protein is Casparian strip membrane protein 1.